Reading from the N-terminus, the 208-residue chain is MQKTELDDQKLVEEIARRIREILELLGENPEREGLKETPERVAKALLEMTSGLRTPPPQIKVFSLGEDGEAYEKNQIVLIKDVNFSSLCEHHMLPIIGKIHVAYIVSNSGKVAGFSKIIRIVNYYSSRLQIQERLVEQIADAIMNSEIKPKGVMVIGNAIHMCSYVRGVKDKEAKLVSVAYRGLFKTNRALQNHVFRLLDNANKVNLL.

Residues Cys89, His92, and Cys163 each coordinate Zn(2+).

Belongs to the GTP cyclohydrolase I family. Homomer.

The catalysed reaction is GTP + H2O = 7,8-dihydroneopterin 3'-triphosphate + formate + H(+). It functions in the pathway cofactor biosynthesis; 7,8-dihydroneopterin triphosphate biosynthesis; 7,8-dihydroneopterin triphosphate from GTP: step 1/1. The sequence is that of GTP cyclohydrolase 1 from Saccharolobus islandicus (strain Y.N.15.51 / Yellowstone #2) (Sulfolobus islandicus).